Consider the following 158-residue polypeptide: NAD(P)H-quinone oxidoreductase subunit J, chloroplastic (158 aa).

It belongs to the complex I 30 kDa subunit family. In terms of assembly, NDH is composed of at least 16 different subunits, 5 of which are encoded in the nucleus.

The protein localises to the plastid. The protein resides in the chloroplast thylakoid membrane. The catalysed reaction is a plastoquinone + NADH + (n+1) H(+)(in) = a plastoquinol + NAD(+) + n H(+)(out). The enzyme catalyses a plastoquinone + NADPH + (n+1) H(+)(in) = a plastoquinol + NADP(+) + n H(+)(out). In terms of biological role, NDH shuttles electrons from NAD(P)H:plastoquinone, via FMN and iron-sulfur (Fe-S) centers, to quinones in the photosynthetic chain and possibly in a chloroplast respiratory chain. The immediate electron acceptor for the enzyme in this species is believed to be plastoquinone. Couples the redox reaction to proton translocation, and thus conserves the redox energy in a proton gradient. In Solanum tuberosum (Potato), this protein is NAD(P)H-quinone oxidoreductase subunit J, chloroplastic.